The chain runs to 400 residues: tRNA pseudouridine synthase Pus10 (400 aa).

The THUMP domain maps to glutamine 77–arginine 194. Position 301 (tyrosine 301) interacts with substrate.

Belongs to the pseudouridine synthase Pus10 family.

It catalyses the reaction uridine(54) in tRNA = pseudouridine(54) in tRNA. The catalysed reaction is uridine(55) in tRNA = pseudouridine(55) in tRNA. Its function is as follows. Responsible for synthesis of pseudouridine from uracil-54 and uracil-55 in the psi GC loop of transfer RNAs. The sequence is that of tRNA pseudouridine synthase Pus10 from Acidilobus saccharovorans (strain DSM 16705 / JCM 18335 / VKM B-2471 / 345-15).